We begin with the raw amino-acid sequence, 459 residues long: MSNYAIILAAGKGTRMKSDLPKVMHKVSGITMLEHVFRSVQAIEPSKIVTVIGHKAELVRDVLGDKSEFVMQTEQLGTGHAVMMAEEELATSKGHTLVIAGDTPLITGESLKNLIDFHVNHKNVATILTADAANPFGYGRIIRNSDDEVTKIVEQKDANDFEQQVKEINTGTYVFDNQSLFEALKDINTNNAQGEYYLTDVIGIFKEAGKKVGAYKLRDFDESLGVNDRVALATAEKVMRHRIARQHMVNGVTVVNPDSAYIDIDVEIGEESVIEPNVTLKGQTKIGKGTLLTNGSYLVDAQVGNDVTITNSMVEESIISDGVTVGPYAHIRPGTSLAKGVHIGNFVEVKGSQIGENTKAGHLTYIGNAEVGCDVNFGAGTITVNYDGQNKFKTEIGSNVFIGSNSTLIAPLEIGDNALTAAGSTITDNVPIDSIAIGRGRQVNKEGYANKKPHHPSQK.

Residues 1 to 229 are pyrophosphorylase; sequence MSNYAIILAA…FDESLGVNDR (229 aa). Residues 8-11, K22, Q72, and 77-78 each bind UDP-N-acetyl-alpha-D-glucosamine; these read LAAG and GT. D102 contributes to the Mg(2+) binding site. Residues G139, E154, N169, and N227 each coordinate UDP-N-acetyl-alpha-D-glucosamine. N227 provides a ligand contact to Mg(2+). The segment at 230–250 is linker; sequence VALATAEKVMRHRIARQHMVN. Residues 251–459 are N-acetyltransferase; the sequence is GVTVVNPDSA…NKKPHHPSQK (209 aa). UDP-N-acetyl-alpha-D-glucosamine-binding residues include R332 and K350. Catalysis depends on H362, which acts as the Proton acceptor. UDP-N-acetyl-alpha-D-glucosamine-binding residues include Y365 and N376. Residues A379, 385–386, S404, A422, and R439 each bind acetyl-CoA; that span reads NY.

This sequence in the N-terminal section; belongs to the N-acetylglucosamine-1-phosphate uridyltransferase family. It in the C-terminal section; belongs to the transferase hexapeptide repeat family. In terms of assembly, homotrimer. Mg(2+) serves as cofactor.

It is found in the cytoplasm. It catalyses the reaction alpha-D-glucosamine 1-phosphate + acetyl-CoA = N-acetyl-alpha-D-glucosamine 1-phosphate + CoA + H(+). It carries out the reaction N-acetyl-alpha-D-glucosamine 1-phosphate + UTP + H(+) = UDP-N-acetyl-alpha-D-glucosamine + diphosphate. It participates in nucleotide-sugar biosynthesis; UDP-N-acetyl-alpha-D-glucosamine biosynthesis; N-acetyl-alpha-D-glucosamine 1-phosphate from alpha-D-glucosamine 6-phosphate (route II): step 2/2. Its pathway is nucleotide-sugar biosynthesis; UDP-N-acetyl-alpha-D-glucosamine biosynthesis; UDP-N-acetyl-alpha-D-glucosamine from N-acetyl-alpha-D-glucosamine 1-phosphate: step 1/1. It functions in the pathway bacterial outer membrane biogenesis; LPS lipid A biosynthesis. Catalyzes the last two sequential reactions in the de novo biosynthetic pathway for UDP-N-acetylglucosamine (UDP-GlcNAc). The C-terminal domain catalyzes the transfer of acetyl group from acetyl coenzyme A to glucosamine-1-phosphate (GlcN-1-P) to produce N-acetylglucosamine-1-phosphate (GlcNAc-1-P), which is converted into UDP-GlcNAc by the transfer of uridine 5-monophosphate (from uridine 5-triphosphate), a reaction catalyzed by the N-terminal domain. This Streptococcus agalactiae serotype V (strain ATCC BAA-611 / 2603 V/R) protein is Bifunctional protein GlmU.